The sequence spans 219 residues: Transmembrane emp24 domain-containing protein 10 (219 aa).

The N-terminal stretch at 1 to 31 (MSGLSGPLSWPGPLLSALLFLFLLGPSSVLG) is a signal peptide. Positions 1–142 (MSGLSGPLSW…KNYEEIAKVE (142 aa)) are required for interaction with STX17. The Lumenal segment spans residues 32 to 185 (ISFHLPVNSR…RDTNESTNTR (154 aa)). In terms of domain architecture, GOLD spans 41-193 (RKCLREEIHK…TRVLYFSIFS (153 aa)). A required for TMED10 and TMED2 cis-Golgi network localization region spans residues 147–178 (LEVELRRLEDLSESIVNDFAYMKKREEEMRDT). A dimethylated arginine mark is found at R171 and R176. N-linked (GlcNAc...) asparagine glycosylation occurs at N179. Residues 186–206 (VLYFSIFSMFCLIGLATWQVF) form a helical membrane-spanning segment. The tract at residues 204 to 219 (QVFYLRRFFKAKKLIE) is interaction with COPG1. Residues 207–219 (YLRRFFKAKKLIE) are Cytoplasmic-facing. An interaction with ARF1 and IL1B region spans residues 207 to 219 (YLRRFFKAKKLIE). The COPII vesicle coat-binding signature appears at 211–212 (FF). The COPI vesicle coat-binding signature appears at 211–219 (FFKAKKLIE).

Belongs to the EMP24/GP25L family. Predominantly dimeric and to a lesser extent monomeric in the ER. Monomer and dimer in ERGIC and cis-Golgi network. Forms homooligomer (via GOLD domain); the assembly is promoted by direct binding with leaderless cargos and may form a protein channel that facilitates cargo entry into the ERGIC. Forms heterooligomeric complexes with other members of the p24 family such as TMED2, TMED7 and TMED9. Interacts (via GOLD domain) with TMED2 (via GOLD domain); the complex is required for export of TMED10 from the ER to the cis-Golgi network; the complex is proposed to be involved in cis-Golgi network dynamics and / or biogenesis. Associates with the COPI vesicle coat subunits (coatomer). Tetramerization of the cytoplasmic domain at the Golgi membrane in vitro; the complex is proposed to interact with COPI coatomer and induce budding of the vesicles. Interacts with COPG1; the interaction involves TMED10 homodimer. Interacts with ARF1 (GDP-bound); the interaction probably involves a TMED10 oligomer. Interacts with SEC23A, SEC24B, SEC24C and SEC24D components of the coat protein complex II/COPII, indicative of an association of TMED10 with the COPII vesicle coat. Interacts with CD59. Interacts with MPPE1/PGAP5; the complex might recruit and sort GPI-anchored proteins to the ER-exit site, or the interaction might lead to recycling of PGAP5 between the ER and the Golgi. Interacts with F2LR1/PAR2. Interacts with KDELR2/ERD2; the interaction is disrupted by KDELR2 ligand. Found in a complex composed at least of SURF4, TMED2 and TMED10. Associates with the presenilin-dependent gamma-secretase complex. Interacts with STX17; the interaction is direct. Interacts with IL-1; the interaction is direct. Interacts with RAB21 (active GTP-bound form); the interaction is indirect and regulates TMED10 abundance and localization at the Golgi. Ubiquitous.

It is found in the endoplasmic reticulum membrane. The protein localises to the endoplasmic reticulum-Golgi intermediate compartment membrane. It localises to the golgi apparatus membrane. The protein resides in the golgi apparatus. Its subcellular location is the cis-Golgi network membrane. It is found in the trans-Golgi network membrane. The protein localises to the cytoplasmic vesicle. It localises to the secretory vesicle membrane. The protein resides in the cell membrane. Its subcellular location is the melanosome. Cargo receptor involved in protein vesicular trafficking and quality control in the endoplasmic reticulum (ER) and Golgi. The p24 protein family is a group of transmembrane proteins that bind coat protein complex I/COPI and coat protein complex II/COPII involved in vesicular trafficking between the membranes. Acts at the lumenal side for incorporation of secretory cargo molecules into transport vesicles and involved in vesicle coat formation at the cytoplasmic side. Mainly functions in the early secretory pathway and cycles between the ER, ER-Golgi intermediate compartment (ERGIC) and Golgi, mediating cargo transport through COPI and COPII-coated vesicles. In COPII vesicle-mediated anterograde transport, involved in the transport of GPI-anchored proteins by acting together with TMED2 as their cargo receptor; the function specifically implies SEC24C and SEC24D of the COPII vesicle coat and lipid raft-like microdomains of the ER. Recognizes GPI anchors structural remodeled in the ER by the GPI inositol-deacylase/PGAP1 and the metallophosphoesterase MPPE1/PGAP5. In COPI vesicle-mediated retrograde transport, involved in the biogenesis of COPI vesicles and vesicle coat recruitment. Involved in trafficking of amyloid beta A4 protein and soluble APP-beta release (independent from the modulation of gamma-secretase activity). Involved in the KDELR2-mediated retrograde transport of the toxin A subunit (CTX-A-K63)together with COPI and the COOH terminus of KDELR2. On Golgi membranes, acts as a primary receptor for ARF1-GDP, a GTP-binding protein involved in COPI-vesicle formation. Increases coatomer-dependent GTPase-activating activity of ARFGAP2 which mediates the hydrolysis of ARF1-bound GTP and therefore modulates protein trafficking from the Golgi apparatus. Involved in the exocytic trafficking of G protein-coupled receptors F2LR1/PAR2 (trypsin and tryspin-like enzyme receptor), OPRM1 (opioid receptor) and P2RY4 (UTD and UDP receptor) from the Golgi to the plasma membrane, thus contributing to receptor resensitization. In addition to its cargo receptor activity, may also act as a protein channel after oligomerization, facilitating the post-translational entry of leaderless cytoplasmic cargo into the ERGIC. Involved in the translocation into ERGIC, the vesicle entry and the secretion of leaderless cargos (lacking the secretion signal sequence), including the mature form of interleukin 1/IL-1 family members, the alpha-crystallin B chain HSPB5, the carbohydrate-binding proteins galectin-1/LGALS1 and galectin-3/LGALS3, the microtubule-associated protein Tau/MAPT, and the annexin A1/ANXA1; the translocation process is dependent on cargo protein unfolding and enhanced by chaperones HSP90AB1 and HSP90B1/GRP9. Could also associates with the presenilin-dependent gamma-secretase complex in order to regulate gamma-cleavages of the amyloid beta A4 protein to yield amyloid-beta 40/Abeta40. This Rattus norvegicus (Rat) protein is Transmembrane emp24 domain-containing protein 10.